We begin with the raw amino-acid sequence, 448 residues long: Adenylosuccinate synthetase (448 aa).

GTP-binding positions include 36–42 and 64–66; these read GDEGKGK and GHT. The active-site Proton acceptor is the Asp37. Residues Asp37 and Gly64 each coordinate Mg(2+). IMP-binding positions include 37-40, 62-65, Thr154, Arg168, Asn246, Thr261, and Arg325; these read DEGK and NAGH. The active-site Proton donor is the His65. 321–327 provides a ligand contact to substrate; sequence VTTKRKR. Residues Arg327, 353 to 355, and 436 to 438 each bind GTP; these read KLD and GVG.

The protein belongs to the adenylosuccinate synthetase family. As to quaternary structure, homodimer. The cofactor is Mg(2+).

It localises to the cytoplasm. The catalysed reaction is IMP + L-aspartate + GTP = N(6)-(1,2-dicarboxyethyl)-AMP + GDP + phosphate + 2 H(+). It participates in purine metabolism; AMP biosynthesis via de novo pathway; AMP from IMP: step 1/2. Functionally, plays an important role in the de novo pathway and in the salvage pathway of purine nucleotide biosynthesis. Catalyzes the first committed step in the biosynthesis of AMP from IMP. The protein is Adenylosuccinate synthetase of Drosophila virilis (Fruit fly).